Reading from the N-terminus, the 1351-residue chain is Spike glycoprotein (1351 aa).

Positions 1-12 (MFLIIFILPTTL) are cleaved as a signal peptide. Topologically, residues 13–1295 (AVIGDFNCTN…GTYEMYVKWP (1283 aa)) are extracellular. In terms of domain architecture, BetaCoV S1-NTD spans 14-294 (VIGDFNCTNS…SFLSEIQCKT (281 aa)). N-linked (GlcNAc...) asparagine; by host glycans are attached at residues Asn-19, Asn-29, Asn-58, Asn-114, Asn-132, Asn-171, Asn-188, Asn-192, and Asn-251. 3 disulfide bridges follow: Cys-20–Cys-156, Cys-151–Cys-183, and Cys-163–Cys-242. Cystine bridges form between Cys-282/Cys-292 and Cys-327/Cys-352. A BetaCoV S1-CTD domain is found at 325-605 (PDCDIDNWLN…GINSGTTCSN (281 aa)). N-linked (GlcNAc...) asparagine; by host glycosylation is found at Asn-335 and Asn-355. Cystine bridges form between Cys-370–Cys-423 and Cys-382–Cys-603. N-linked (GlcNAc...) asparagine; by host glycans are attached at residues Asn-433, Asn-454, Asn-561, Asn-664, Asn-684, Asn-703, Asn-725, Asn-771, Asn-776, and Asn-793. Fusion peptide stretches follow at residues 901-922 (SLLEDLLFNKVKLSDVGFVEAY) and 920-940 (EAYNNCTGGSEIRDLLCVQSF). An N-linked (GlcNAc...) asparagine; by host glycan is attached at Asn-924. The cysteines at positions 925 and 936 are disulfide-linked. The segment at 1001–1051 (QKLIANAFNKALLSIQNGFTATNSALAKIQSVVNANAQALNSLLQQLFNKF) is heptad repeat 1. The stretch at 1030–1074 (QSVVNANAQALNSLLQQLFNKFGAISSSLQEILSRLDNLEAQVQI) forms a coiled coil. 8 N-linked (GlcNAc...) asparagine; by host glycosylation sites follow: Asn-1181, Asn-1211, Asn-1221, Asn-1226, Asn-1240, Asn-1247, Asn-1255, and Asn-1276. Residues 1245–1284 (APNLTFNSHINATFLDLYYEMNVIQESIKSLNSSFINLKE) are heptad repeat 2. A coiled-coil region spans residues 1257–1285 (TFLDLYYEMNVIQESIKSLNSSFINLKEI). The chain crosses the membrane as a helical span at residues 1296–1316 (WYIWLLIVILFIIFLMILFFI). Residues 1317-1351 (CCCTGCGSACFSKCHNCCDEYGGHNDFVIKASHDD) lie on the Cytoplasmic side of the membrane. The KxHxx motif lies at 1347–1351 (ASHDD).

This sequence belongs to the betacoronaviruses spike protein family. As to quaternary structure, homotrimer; each monomer consists of a S1 and a S2 subunit. The resulting peplomers protrude from the virus surface as spikes. Specific enzymatic cleavages in vivo yield mature proteins. The precursor is processed into S1 and S2 by host cell furin or another cellular protease to yield the mature S1 and S2 proteins. Additionally, a second cleavage leads to the release of a fusion peptide after viral attachment to host cell receptor. Post-translationally, the cytoplasmic Cys-rich domain is palmitoylated. Spike glycoprotein is digested within host endosomes.

The protein resides in the virion membrane. It is found in the host endoplasmic reticulum-Golgi intermediate compartment membrane. It localises to the host cell membrane. In terms of biological role, attaches the virion to the cell membrane by interacting with host receptor, initiating the infection. Functionally, mediates fusion of the virion and cellular membranes by acting as a class I viral fusion protein. Under the current model, the protein has at least three conformational states: pre-fusion native state, pre-hairpin intermediate state, and post-fusion hairpin state. During viral and target cell membrane fusion, the coiled coil regions (heptad repeats) assume a trimer-of-hairpins structure, positioning the fusion peptide in close proximity to the C-terminal region of the ectodomain. The formation of this structure appears to drive apposition and subsequent fusion of viral and target cell membranes. Acts as a viral fusion peptide which is unmasked following S2 cleavage occurring upon virus endocytosis. The polypeptide is Spike glycoprotein (Human coronavirus HKU1 (isolate N2) (HCoV-HKU1)).